Consider the following 414-residue polypeptide: MSQNKLKTLIEELKKRKVFNNITSEEKVDLITLDHGIYVGFDPTAISLHLGNYIQMVNLKRFQNVGFKTIAILGGATSMIGDPSFKDSERKLLSNETILENKKHIRKQLENFGFKVIDNLDFYKDMNILDYLRSVGKFFNVSTMMSRDSVANRIQSGLSFTEFSYQTLQAYDFKVLCEKENVMMQLGGSDQWGNLVSGLDFINKTLSKNLPTIGITMNLLVDSNGNKIGKSTGGASLWIDKTLTSPYVLYQYLLNTNDDDAYNLLLQLTFLQLSEIERIKNEHLKNPKLRLMQSRLSFEVVKDIHGKEEAQRALHISTSLFKEKNSWFNLSLEDLIQLKGSVDFVPFKDDLFLTLVDSKIISSKREFNEFVRDKSLKINGQDVTGLDYDLPWENYDNKYLILKKGKKQYWVIYK.

Residue tyrosine 38 participates in L-tyrosine binding. The 'HIGH' region motif lies at 43–52 (PTAISLHLGN). Positions 165 and 169 each coordinate L-tyrosine. Positions 227 to 231 (KIGKS) match the 'KMSKS' region motif. Lysine 230 contributes to the ATP binding site. Positions 349–413 (DDLFLTLVDS…KGKKQYWVIY (65 aa)) constitute an S4 RNA-binding domain.

The protein belongs to the class-I aminoacyl-tRNA synthetase family. TyrS type 1 subfamily. In terms of assembly, homodimer.

It is found in the cytoplasm. The enzyme catalyses tRNA(Tyr) + L-tyrosine + ATP = L-tyrosyl-tRNA(Tyr) + AMP + diphosphate + H(+). In terms of biological role, catalyzes the attachment of tyrosine to tRNA(Tyr) in a two-step reaction: tyrosine is first activated by ATP to form Tyr-AMP and then transferred to the acceptor end of tRNA(Tyr). The protein is Tyrosine--tRNA ligase of Mycoplasmopsis pulmonis (strain UAB CTIP) (Mycoplasma pulmonis).